The sequence spans 304 residues: MGQCVTKCKNPSSTLGSKNGDRDPSNKSHSRRGAGHREEQVPPCGKPGGDILVNGTKKAEAATEACQLPTSSGDAGRESKSNAEESSLQRLEELFRRYKDEREDAILEEGMERFCNDLCVDPTEFRVLLLAWKFQAATMCKFTRKEFFDGCKAISADSIDGICARFPSLLTEAKQEDKFKDLYRFTFQFGLDSEEGQRSLHREIAIALWKLVFTQNNPPVLDQWLNFLTENPSGIKGISRDTWNMFLNFTQVIGPDLSNYSEDEAWPSLFDTFVEWEMERRKREGEGRGALSSGPEGLCPEEQT.

2 disordered regions span residues Met1 to Ser86 and Glu284 to Thr304. Residue Gly2 is the site of N-myristoyl glycine attachment. Residues Ser86–Met278 enclose the DCUN1 domain.

As to quaternary structure, part of a complex containing DCUN1D3, CUL3 and RBX1. Interacts (via the DCUN1 domain) with the unneddylated cullins: interacts with CUL1, CUL2, CUL3, CUL4A, CUL4B and CUL5; these interactions promote the cullin neddylation and the identity of the cullin dictates the affinity of the interaction. Interacts preferentially with CUL3; this interaction triggers the relocalization of CUL3 to the cell membrane where CUL3 is neddylated. Interacts (via DCUN1 domain) with RBX1. May also interact with regulators or subunits of cullin-RING ligases such as RNF7, ELOB and DDB1; these interactions are bridged by cullins. Interacts (via DCUN1 domain) with CAND1; this interaction is bridged by cullins and strongly inhibits cullin neddylation. These CAND-cullin-DCNL complexes can only be neddylated in the presence of a substrate adapter. Interacts (via DCUN1 domain) with the N-terminally acetylated form of UBE2M and UBE2F.

The protein resides in the cell membrane. It localises to the cytoplasm. The protein localises to the nucleus. Its subcellular location is the perinuclear region. In terms of biological role, contributes to the neddylation of all cullins by transferring NEDD8 from N-terminally acetylated NEDD8-conjugating E2s enzyme to different cullin C-terminal domain-RBX complexes and may play a role in the cell cycle progression by regulating the SCF ubiquitin E3 ligase complex, after UV damage. At the cell membrane, can promote and as well inhibit cullins neddylation. This chain is DCN1-like protein 3, found in Pongo abelii (Sumatran orangutan).